The following is a 112-amino-acid chain: Integration host factor subunit alpha (112 aa).

This sequence belongs to the bacterial histone-like protein family. Heterodimer of an alpha and a beta chain.

Functionally, this protein is one of the two subunits of integration host factor, a specific DNA-binding protein that functions in genetic recombination as well as in transcriptional and translational control. This is Integration host factor subunit alpha from Rhizobium etli (strain ATCC 51251 / DSM 11541 / JCM 21823 / NBRC 15573 / CFN 42).